Here is a 30-residue protein sequence, read N- to C-terminus: Superoxide dismutase [Cu-Zn] 1 (30 aa).

It belongs to the Cu-Zn superoxide dismutase family. Requires Cu cation as cofactor. Zn(2+) serves as cofactor. In terms of tissue distribution, expressed in fruits, leaves and pollen grains.

The protein resides in the cytoplasm. It is found in the endoplasmic reticulum. The catalysed reaction is 2 superoxide + 2 H(+) = H2O2 + O2. Inhibited by KCN and H(2)O(2). Its function is as follows. Destroys radicals which are normally produced within the cells and which are toxic to biological systems. Probably involved in the protection against oxidative stress during pollen development. The chain is Superoxide dismutase [Cu-Zn] 1 from Olea europaea (Common olive).